The chain runs to 198 residues: Glycerol-3-phosphate acyltransferase (198 aa).

A run of 5 helical transmembrane segments spans residues 2 to 22 (IIDL…FGVL), 53 to 73 (LGFI…VIAT), 79 to 99 (PFMY…SCFL), 113 to 133 (VLIP…TFFI), and 152 to 172 (IILF…IMAL).

Belongs to the PlsY family. As to quaternary structure, probably interacts with PlsX.

Its subcellular location is the cell membrane. The enzyme catalyses an acyl phosphate + sn-glycerol 3-phosphate = a 1-acyl-sn-glycero-3-phosphate + phosphate. It functions in the pathway lipid metabolism; phospholipid metabolism. Functionally, catalyzes the transfer of an acyl group from acyl-phosphate (acyl-PO(4)) to glycerol-3-phosphate (G3P) to form lysophosphatidic acid (LPA). This enzyme utilizes acyl-phosphate as fatty acyl donor, but not acyl-CoA or acyl-ACP. This chain is Glycerol-3-phosphate acyltransferase, found in Lawsonia intracellularis (strain PHE/MN1-00).